The sequence spans 283 residues: Pantothenate synthetase (283 aa).

30–37 (MGNLHAGH) is a binding site for ATP. Histidine 37 functions as the Proton donor in the catalytic mechanism. Glutamine 61 contributes to the (R)-pantoate binding site. Glutamine 61 contacts beta-alanine. 149–152 (GEKD) is an ATP binding site. Glutamine 155 contacts (R)-pantoate. ATP contacts are provided by residues valine 178 and 186 to 189 (LSSR).

It belongs to the pantothenate synthetase family. As to quaternary structure, homodimer.

It is found in the cytoplasm. The enzyme catalyses (R)-pantoate + beta-alanine + ATP = (R)-pantothenate + AMP + diphosphate + H(+). It participates in cofactor biosynthesis; (R)-pantothenate biosynthesis; (R)-pantothenate from (R)-pantoate and beta-alanine: step 1/1. Its function is as follows. Catalyzes the condensation of pantoate with beta-alanine in an ATP-dependent reaction via a pantoyl-adenylate intermediate. This is Pantothenate synthetase from Pseudomonas aeruginosa (strain UCBPP-PA14).